A 320-amino-acid chain; its full sequence is Small ribosomal subunit protein uS15m (320 aa).

Disordered stretches follow at residues 37 to 60 and 214 to 242; these read NISQ…AQQR and QSLE…DTGS.

It belongs to the universal ribosomal protein uS15 family. In terms of assembly, component of the mitochondrial small ribosomal subunit (mt-SSU). Mature N.crassa 74S mitochondrial ribosomes consist of a small (37S) and a large (54S) subunit. The 37S small subunit contains a 16S ribosomal RNA (16S mt-rRNA) and 32 different proteins. The 54S large subunit contains a 23S rRNA (23S mt-rRNA) and 42 different proteins.

The protein resides in the mitochondrion. Its function is as follows. Component of the mitochondrial ribosome (mitoribosome), a dedicated translation machinery responsible for the synthesis of mitochondrial genome-encoded proteins, including at least some of the essential transmembrane subunits of the mitochondrial respiratory chain. The mitoribosomes are attached to the mitochondrial inner membrane and translation products are cotranslationally integrated into the membrane. The polypeptide is Small ribosomal subunit protein uS15m (mrps28) (Neurospora crassa (strain ATCC 24698 / 74-OR23-1A / CBS 708.71 / DSM 1257 / FGSC 987)).